A 471-amino-acid chain; its full sequence is Lincomycin resistance protein LmrB (471 aa).

The next 13 helical transmembrane spans lie at 15 to 34 (PIIA…ETAL), 55 to 77 (LTTG…LQWF), 82 to 104 (LFFT…PTFA), 111 to 131 (VVQA…ILLI), 141 to 163 (MGMI…GLIL), 170 to 187 (WIFW…LFGM), 202 to 224 (DILS…SSAG), 231 to 253 (ATVL…RQLT), 268 to 290 (MFTL…MILL), 297 to 319 (SLAL…NGLM), 329 to 351 (AYGP…FFLT), 358 to 380 (SALT…MMPA), and 445 to 467 (GIQN…SLFI).

The protein belongs to the major facilitator superfamily. EmrB family.

The protein localises to the cell membrane. Functionally, proton-dependent transporter. May mediate the efflux of lincomycin. This Listeria innocua serovar 6a (strain ATCC BAA-680 / CLIP 11262) protein is Lincomycin resistance protein LmrB (lmrB).